The following is a 113-amino-acid chain: U11-theraphotoxin-Hhn1a (113 aa).

The N-terminal stretch at 1–21 (MNTVRVTFLLVFVLAVSLGQA) is a signal peptide. Positions 22–74 (DKDENRMEMQKKTEQGKSYLDFAENLLLQKLEELEAKLLEEDSEESRNSRQKR) are excised as a propeptide. 3 disulfide bridges follow: Cys-75/Cys-90, Cys-82/Cys-95, and Cys-89/Cys-110.

The protein belongs to the neurotoxin 14 (magi-1) family. 01 (HNTX-16) subfamily. Expressed by the venom gland.

The protein localises to the secreted. Its function is as follows. Probable ion channel inhibitor. This is U11-theraphotoxin-Hhn1a from Cyriopagopus hainanus (Chinese bird spider).